The primary structure comprises 500 residues: L-arabinose isomerase (500 aa).

Positions 306, 333, 350, and 450 each coordinate Mn(2+).

Belongs to the arabinose isomerase family. As to quaternary structure, homohexamer. The cofactor is Mn(2+).

It carries out the reaction beta-L-arabinopyranose = L-ribulose. The protein operates within carbohydrate degradation; L-arabinose degradation via L-ribulose; D-xylulose 5-phosphate from L-arabinose (bacterial route): step 1/3. Functionally, catalyzes the conversion of L-arabinose to L-ribulose. The polypeptide is L-arabinose isomerase (Shigella boydii serotype 18 (strain CDC 3083-94 / BS512)).